The following is a 323-amino-acid chain: MSPAHPENWPVLVVKGGVDDELLRDFTALAAAAEESDGNPPLSEQTFVTLRAGESGTHSLLSLALYAPDEESDPATAQDLAGFAVVVEEADGTGVLELAVHPSYRNQGVADRLVATLKASRGFDGLKAWSHGNHEAAADLAAKYGYAPIRELWKMRLTASDAELPDAALPDNVSLRAFIPGQDEEAWLAANKAAFSHHPEQGNMTRQDLAARMAEDWFDPAGFLLAVDPSGRILGFHWTKVHPGHGGHPAIGEVYVVGVTPEAQGMGLGKALTVAGIKYLQDKGLHAVVLYTDADNTPAVSLYRRLGFTRWDADVMYGPKNGG.

Residue E44 participates in 1D-myo-inositol 2-(L-cysteinylamino)-2-deoxy-alpha-D-glucopyranoside binding. 98–100 lines the acetyl-CoA pocket; sequence LAV. The 151-residue stretch at 173 to 323 folds into the N-acetyltransferase domain; it reads VSLRAFIPGQ…DVMYGPKNGG (151 aa). 1D-myo-inositol 2-(L-cysteinylamino)-2-deoxy-alpha-D-glucopyranoside is bound by residues E200, K240, and E253. Residues 257–259 and 264–270 each bind acetyl-CoA; these read VGV and QGMGLGK. Y291 contacts 1D-myo-inositol 2-(L-cysteinylamino)-2-deoxy-alpha-D-glucopyranoside.

Belongs to the acetyltransferase family. MshD subfamily. In terms of assembly, monomer.

It carries out the reaction 1D-myo-inositol 2-(L-cysteinylamino)-2-deoxy-alpha-D-glucopyranoside + acetyl-CoA = mycothiol + CoA + H(+). Its function is as follows. Catalyzes the transfer of acetyl from acetyl-CoA to desacetylmycothiol (Cys-GlcN-Ins) to form mycothiol. This chain is Mycothiol acetyltransferase, found in Arthrobacter sp. (strain FB24).